A 421-amino-acid polypeptide reads, in one-letter code: Peroxisomal succinyl-coenzyme A thioesterase (421 aa).

S232 functions as the Charge relay system in the catalytic mechanism. K313 is modified (N6-succinyllysine). Catalysis depends on charge relay system residues D326 and H360. The Microbody targeting signal motif lies at 419-421 (CRL).

This sequence belongs to the C/M/P thioester hydrolase family. Mainly expressed in liver and kidney. Weakly expressed in other tissues including intestine, adrenal gland and adipose tissues.

The protein localises to the peroxisome. It carries out the reaction succinyl-CoA + H2O = succinate + CoA + H(+). The catalysed reaction is glutaryl-CoA + H2O = glutarate + CoA + H(+). Its pathway is lipid metabolism; fatty acid metabolism. In terms of biological role, catalyzes the hydrolysis of acyl-CoAs into free fatty acids and coenzyme A (CoASH), regulating their respective intracellular levels. In contrast to its human ortholog, functions essentially as a succinyl-CoA thioesterase with no activity with medium to long chain saturated acyl-CoAs and with a low activity toward glutaryl-CoA. This chain is Peroxisomal succinyl-coenzyme A thioesterase (Acot4), found in Mus musculus (Mouse).